Consider the following 81-residue polypeptide: Putative truncated GMC-type inactive oxidoreductase R833 (81 aa).

It belongs to the GMC oxidoreductase family.

The sequence is that of Putative truncated GMC-type inactive oxidoreductase R833 from Acanthamoeba polyphaga mimivirus (APMV).